A 1342-amino-acid polypeptide reads, in one-letter code: DNA-directed RNA polymerase subunit beta (1342 aa).

Belongs to the RNA polymerase beta chain family. The RNAP catalytic core consists of 2 alpha, 1 beta, 1 beta' and 1 omega subunit. When a sigma factor is associated with the core the holoenzyme is formed, which can initiate transcription.

The enzyme catalyses RNA(n) + a ribonucleoside 5'-triphosphate = RNA(n+1) + diphosphate. DNA-dependent RNA polymerase catalyzes the transcription of DNA into RNA using the four ribonucleoside triphosphates as substrates. This Actinobacillus pleuropneumoniae serotype 3 (strain JL03) protein is DNA-directed RNA polymerase subunit beta.